Reading from the N-terminus, the 122-residue chain is UPF0382 membrane protein SH2409 (122 aa).

4 helical membrane-spanning segments follow: residues 3–23 (LFIILGALCTMMSVGTGAFGA), 46–66 (MYHGLGLIIIGVISGTTSINV), 69–89 (AGWLLFLGVVFFSGSLYILAL), and 98–118 (ITPIGGLLFIAGWLMLIISTF).

Belongs to the UPF0382 family.

It localises to the cell membrane. This is UPF0382 membrane protein SH2409 from Staphylococcus haemolyticus (strain JCSC1435).